We begin with the raw amino-acid sequence, 386 residues long: Probable mannan endo-1,4-beta-mannosidase A (386 aa).

The N-terminal stretch at 1–21 (MKLNPSLLTAAGLVSAQLASA) is a signal peptide. Trp95 and Asn207 together coordinate substrate. Glu208 (proton donor) is an active-site residue. Tyr283 serves as a coordination point for substrate. Glu316 functions as the Nucleophile in the catalytic mechanism. Asn336 carries N-linked (GlcNAc...) asparagine glycosylation. Trp346 contacts substrate.

It belongs to the glycosyl hydrolase 5 (cellulase A) family.

The protein localises to the secreted. It carries out the reaction Random hydrolysis of (1-&gt;4)-beta-D-mannosidic linkages in mannans, galactomannans and glucomannans.. Endo-1,4-mannanase, a crucial enzyme for depolymerization of seed galactomannans and wood galactoglucomannans. The sequence is that of Probable mannan endo-1,4-beta-mannosidase A (manA) from Aspergillus oryzae (strain ATCC 42149 / RIB 40) (Yellow koji mold).